A 378-amino-acid polypeptide reads, in one-letter code: Alpha-galactosidase (378 aa).

Residues 1-15 (MVKSPGTEDYTRRSL) form the signal peptide. 2 disulfides stabilise this stretch: Cys36–Cys68 and Cys116–Cys147. Residue Asp145 is the Nucleophile of the active site. 178–182 (EWGEE) contributes to the substrate binding site. The Proton donor role is filled by Asp200.

This sequence belongs to the glycosyl hydrolase 27 family.

It catalyses the reaction Hydrolysis of terminal, non-reducing alpha-D-galactose residues in alpha-D-galactosides, including galactose oligosaccharides, galactomannans and galactolipids.. Its function is as follows. Preferentially cleaves alpha-1,3 and alpha-1,4 glycoside linkages. Involved in the hydrolysis of the galactomannan, it splits alpha-linked galactose moieties. It is particularly suitable for the hydrolysis of guar gum to a gum with improved gelling properties. Can cleave terminal alpha-1,3-linked galactose residues responsible for blood group B specificity from the surface of erythrocytes thereby converting these cells serologically to group O. The protein is Alpha-galactosidase of Coffea arabica (Arabian coffee).